The primary structure comprises 962 residues: UBP9-binding protein bun107 (962 aa).

WD repeat units lie at residues 25-69 (DANC…GKAS), 77-116 (AHSAWVNDIALTHDSEGVISCSSDSTVKLWKPHVLNASCL), 121-162 (EHTD…EVMR), 172-211 (VVGPRSGVYSLAANNNIIANGGLQKDIQLWDCVSKKRITD), 214-253 (GHTDNVRDILISDDGRTILTASSDATIKLWSLRAQKCLFS), and 302-339 (KQDAPVSDIVARQSFIWSTSRDGSILRWKDEPLFNQDV). Over residues 568 to 578 (SPLRIRSRPSP) the composition is skewed to low complexity. 2 disordered regions span residues 568–615 (SPLR…QIPS) and 702–758 (RAAS…PREL). Residues 707 to 723 (RVFSTGTSVTSPQALSK) are compositionally biased toward polar residues. Ser717 is subject to Phosphoserine. The span at 724-738 (TNNTVNNAANTENNT) shows a compositional bias: low complexity.

As to quaternary structure, interacts with ubp9 and bun62.

It localises to the cytoplasm. The protein resides in the cell tip. Functionally, required for the ubp9 recruitment to septa and cell tips but also for its enzymatic activity at these specific locations. This chain is UBP9-binding protein bun107 (bun107), found in Schizosaccharomyces pombe (strain 972 / ATCC 24843) (Fission yeast).